We begin with the raw amino-acid sequence, 396 residues long: MESVMSKYENQILIFPDYLEEFPDTDELVWILGKQHPLKTEKSKLLSDISARLWFTYRRKFSPIGGTGPSSDAGWGCMLRCGQMMLAQALICRHLGRDWNWERQKEQPKEYQRILQCFLDRKDCCYSIHQMAQMGVGEGKSIGEWFGPNTVAQVIKKLALFDEWNSLAVYVSMDNTVVIEDIKKMCCVLPVGAADPAGDFLTASNQSRDTSVPCSAWKPLLLIVPLRLGINQINPVYVEAFKECFKMPQSLGALGGKPNNAYYFIGFLGDELIFLDPHTTQTFVDIEESGLVDDQTFHCLQSPQRMSILNLDPSVALGFFCKEEKDFDNWCSLVQKEILKENLRMFELVQKHPSHWPPFVPPAKPEVTTTGAEFIESTEQLEDFELEEDFEILSVG.

Residue Cys-77 is the Nucleophile of the active site. Catalysis depends on residues Asp-276 and His-278. An LIR motif is present at residues 390-393 (FEIL).

This sequence belongs to the peptidase C54 family. As to quaternary structure, interacts with ATG9A; the interaction is direct.

Its subcellular location is the cytoplasm. The enzyme catalyses [protein]-C-terminal L-amino acid-glycyl-phosphatidylethanolamide + H2O = [protein]-C-terminal L-amino acid-glycine + a 1,2-diacyl-sn-glycero-3-phosphoethanolamine. Its activity is regulated as follows. Inhibited by N-ethylmaleimide. Redox-regulated during autophagy since reducing conditions activate ATG4A whereas an oxidizing environment such as the presence of H(2)O(2) inhibits its activity. In terms of biological role, cysteine protease that plays a key role in autophagy by mediating both proteolytic activation and delipidation of ATG8 family proteins. The protease activity is required for proteolytic activation of ATG8 family proteins: cleaves the C-terminal amino acid of ATG8 proteins to reveal a C-terminal glycine. Exposure of the glycine at the C-terminus is essential for ATG8 proteins conjugation to phosphatidylethanolamine (PE) and insertion to membranes, which is necessary for autophagy. Preferred substrate is GABARAPL2 followed by MAP1LC3A and GABARAP. Protease activity is also required to counteract formation of high-molecular weight conjugates of ATG8 proteins (ATG8ylation): acts as a deubiquitinating-like enzyme that removes ATG8 conjugated to other proteins, such as ATG3. In addition to the protease activity, also mediates delipidation of ATG8 family proteins. Catalyzes delipidation of PE-conjugated forms of ATG8 proteins during macroautophagy. Compared to ATG4B, the major protein for proteolytic activation of ATG8 proteins, shows weaker ability to cleave the C-terminal amino acid of ATG8 proteins, while it displays stronger delipidation activity. Involved in phagophore growth during mitophagy independently of its protease activity and of ATG8 proteins: acts by regulating ATG9A trafficking to mitochondria and promoting phagophore-endoplasmic reticulum contacts during the lipid transfer phase of mitophagy. This Mus musculus (Mouse) protein is Cysteine protease ATG4A.